Reading from the N-terminus, the 467-residue chain is UTP--glucose-1-phosphate uridylyltransferase (467 aa).

Residues 83–86, Lys97, Gln160, and Gly189 contribute to the UTP site; that span reads LNGG. 85–86 serves as a coordination point for substrate; sequence GG. Residues His190 and 218 to 220 each bind substrate; that span reads NSD. The UTP site is built by Asp220 and Lys358.

Belongs to the UDPGP type 1 family.

Its subcellular location is the cytoplasm. The enzyme catalyses alpha-D-glucose 1-phosphate + UTP + H(+) = UDP-alpha-D-glucose + diphosphate. In terms of biological role, plays a central role as a glucosyl donor in cellular metabolic pathways. The chain is UTP--glucose-1-phosphate uridylyltransferase (UGPA) from Musa acuminata (Banana).